Here is a 194-residue protein sequence, read N- to C-terminus: Imidazoleglycerol-phosphate dehydratase (194 aa).

This sequence belongs to the imidazoleglycerol-phosphate dehydratase family.

It localises to the cytoplasm. It carries out the reaction D-erythro-1-(imidazol-4-yl)glycerol 3-phosphate = 3-(imidazol-4-yl)-2-oxopropyl phosphate + H2O. It functions in the pathway amino-acid biosynthesis; L-histidine biosynthesis; L-histidine from 5-phospho-alpha-D-ribose 1-diphosphate: step 6/9. This chain is Imidazoleglycerol-phosphate dehydratase, found in Streptococcus gordonii (strain Challis / ATCC 35105 / BCRC 15272 / CH1 / DL1 / V288).